The following is a 340-amino-acid chain: Flap endonuclease 1 (340 aa).

Positions 1–98 (MGVDLGGLVE…ETIKARAEVR (98 aa)) are N-domain. Mg(2+) contacts are provided by Asp-27, Asp-80, Glu-151, Glu-153, Asp-172, Asp-174, and Asp-235. The tract at residues 115–256 (EAYKYAQAST…TALKLVKKHG (142 aa)) is I-domain. Residues 332-340 (KQKTLSSWF) are interaction with PCNA.

It belongs to the XPG/RAD2 endonuclease family. FEN1 subfamily. In terms of assembly, interacts with PCNA. PCNA stimulates the nuclease activity without altering cleavage specificity. The cofactor is Mg(2+).

Its function is as follows. Structure-specific nuclease with 5'-flap endonuclease and 5'-3' exonuclease activities involved in DNA replication and repair. During DNA replication, cleaves the 5'-overhanging flap structure that is generated by displacement synthesis when DNA polymerase encounters the 5'-end of a downstream Okazaki fragment. Binds the unpaired 3'-DNA end and kinks the DNA to facilitate 5' cleavage specificity. Cleaves one nucleotide into the double-stranded DNA from the junction in flap DNA, leaving a nick for ligation. Also involved in the base excision repair (BER) pathway. Acts as a genome stabilization factor that prevents flaps from equilibrating into structures that lead to duplications and deletions. Also possesses 5'-3' exonuclease activity on nicked or gapped double-stranded DNA. This is Flap endonuclease 1 from Methanocella arvoryzae (strain DSM 22066 / NBRC 105507 / MRE50).